A 446-amino-acid chain; its full sequence is Chromosomal replication initiator protein DnaA (446 aa).

Residues 1–92 form a domain I, interacts with DnaA modulators region; sequence MENISDLWNS…SQAEEEIDLP (92 aa). Positions 93–109 are domain II; the sequence is PSKPNAAQDDSNHLPQS. Residues 110–326 are domain III, AAA+ region; that stretch reads MLNPKYTFDT…GALIRVVAYS (217 aa). 4 residues coordinate ATP: glycine 154, glycine 156, lysine 157, and threonine 158. Residues 327–446 are domain IV, binds dsDNA; sequence SLINKDINAD…QVEEINDILK (120 aa).

Belongs to the DnaA family. As to quaternary structure, oligomerizes as a right-handed, spiral filament on DNA at oriC.

Its subcellular location is the cytoplasm. Functionally, plays an essential role in the initiation and regulation of chromosomal replication. ATP-DnaA binds to the origin of replication (oriC) to initiate formation of the DNA replication initiation complex once per cell cycle. Binds the DnaA box (a 9 base pair repeat at the origin) and separates the double-stranded (ds)DNA. Forms a right-handed helical filament on oriC DNA; dsDNA binds to the exterior of the filament while single-stranded (ss)DNA is stabiized in the filament's interior. The ATP-DnaA-oriC complex binds and stabilizes one strand of the AT-rich DNA unwinding element (DUE), permitting loading of DNA polymerase. After initiation quickly degrades to an ADP-DnaA complex that is not apt for DNA replication. Binds acidic phospholipids. This chain is Chromosomal replication initiator protein DnaA, found in Bacillus cereus (strain 03BB102).